A 327-amino-acid chain; its full sequence is Lipoyl synthase (327 aa).

7 residues coordinate [4Fe-4S] cluster: cysteine 72, cysteine 77, cysteine 83, cysteine 98, cysteine 102, cysteine 105, and serine 313. Positions 83-302 (CWSHGTATIM…RRVGLEKGFL (220 aa)) constitute a Radical SAM core domain.

The protein belongs to the radical SAM superfamily. Lipoyl synthase family. [4Fe-4S] cluster serves as cofactor.

Its subcellular location is the cytoplasm. It catalyses the reaction [[Fe-S] cluster scaffold protein carrying a second [4Fe-4S](2+) cluster] + N(6)-octanoyl-L-lysyl-[protein] + 2 oxidized [2Fe-2S]-[ferredoxin] + 2 S-adenosyl-L-methionine + 4 H(+) = [[Fe-S] cluster scaffold protein] + N(6)-[(R)-dihydrolipoyl]-L-lysyl-[protein] + 4 Fe(3+) + 2 hydrogen sulfide + 2 5'-deoxyadenosine + 2 L-methionine + 2 reduced [2Fe-2S]-[ferredoxin]. It participates in protein modification; protein lipoylation via endogenous pathway; protein N(6)-(lipoyl)lysine from octanoyl-[acyl-carrier-protein]: step 2/2. Catalyzes the radical-mediated insertion of two sulfur atoms into the C-6 and C-8 positions of the octanoyl moiety bound to the lipoyl domains of lipoate-dependent enzymes, thereby converting the octanoylated domains into lipoylated derivatives. In Francisella philomiragia subsp. philomiragia (strain ATCC 25017 / CCUG 19701 / FSC 153 / O#319-036), this protein is Lipoyl synthase.